The chain runs to 386 residues: SWI/SNF-related matrix-associated actin-dependent regulator of chromatin subfamily B member 1 (386 aa).

Positions methionine 1–serine 114 are DNA-binding.

This sequence belongs to the SNF5 family. Component of the multiprotein chromatin-remodeling complexes SWI/SNF. Component of neural progenitors-specific chromatin remodeling complex (npBAF complex) and the neuron-specific chromatin remodeling complex (nBAF complex). Component of the BAF (SWI/SNF) chromatin remodeling complex. Component of the SWI/SNF-B (PBAF) chromatin remodeling complex. Binds to double-stranded DNA.

The protein localises to the nucleus. Its function is as follows. Involved in chromatin-remodeling. Core component of the BAF (SWI/SNF) complex. This ATP-dependent chromatin-remodeling complex plays important roles in cell proliferation and differentiation, in cellular antiviral activities and inhibition of tumor formation. Belongs to the neural progenitors-specific chromatin remodeling complex (npBAF complex) and the neuron-specific chromatin remodeling complex (nBAF complex) and may play a role in neural development. The protein is SWI/SNF-related matrix-associated actin-dependent regulator of chromatin subfamily B member 1 (SMARCB1) of Gallus gallus (Chicken).